Here is a 336-residue protein sequence, read N- to C-terminus: tRNA N6-adenosine threonylcarbamoyltransferase (336 aa).

Fe cation-binding residues include His114 and His118. Substrate-binding positions include 136 to 140 (LVSGG), Asp169, Gly182, Asp186, and Asn275. Residue Asp302 participates in Fe cation binding.

The protein belongs to the KAE1 / TsaD family. Fe(2+) serves as cofactor.

Its subcellular location is the cytoplasm. The catalysed reaction is L-threonylcarbamoyladenylate + adenosine(37) in tRNA = N(6)-L-threonylcarbamoyladenosine(37) in tRNA + AMP + H(+). Required for the formation of a threonylcarbamoyl group on adenosine at position 37 (t(6)A37) in tRNAs that read codons beginning with adenine. Is involved in the transfer of the threonylcarbamoyl moiety of threonylcarbamoyl-AMP (TC-AMP) to the N6 group of A37, together with TsaE and TsaB. TsaD likely plays a direct catalytic role in this reaction. This is tRNA N6-adenosine threonylcarbamoyltransferase from Streptococcus agalactiae serotype III (strain NEM316).